A 564-amino-acid polypeptide reads, in one-letter code: Eukaryotic translation initiation factor 3 subunit L (564 aa).

Ser2 bears the N-acetylserine mark. The region spanning 331–537 (DAIRVFANIL…IHIADTKVAR (207 aa)) is the PCI domain. An N6-acetyllysine mark is found at Lys465 and Lys549.

It belongs to the eIF-3 subunit L family. In terms of assembly, component of the eukaryotic translation initiation factor 3 (eIF-3) complex, which is composed of 13 subunits: EIF3A, EIF3B, EIF3C, EIF3D, EIF3E, EIF3F, EIF3G, EIF3H, EIF3I, EIF3J, EIF3K, EIF3L and EIF3M. The eIF-3 complex appears to include 3 stable modules: module A is composed of EIF3A, EIF3B, EIF3G and EIF3I; module B is composed of EIF3F, EIF3H, and EIF3M; and module C is composed of EIF3C, EIF3D, EIF3E, EIF3K and EIF3L. EIF3C of module C binds EIF3B of module A and EIF3H of module B, thereby linking the three modules. EIF3J is a labile subunit that binds to the eIF-3 complex via EIF3B. The eIF-3 complex may interact with RPS6KB1 under conditions of nutrient depletion. Mitogenic stimulation may lead to binding and activation of a complex composed of MTOR and RPTOR, leading to phosphorylation and release of RPS6KB1 and binding of EIF4B to eIF-3. Interacts with RRN3.

It is found in the cytoplasm. Functionally, component of the eukaryotic translation initiation factor 3 (eIF-3) complex, which is required for several steps in the initiation of protein synthesis. The eIF-3 complex associates with the 40S ribosome and facilitates the recruitment of eIF-1, eIF-1A, eIF-2:GTP:methionyl-tRNAi and eIF-5 to form the 43S pre-initiation complex (43S PIC). The eIF-3 complex stimulates mRNA recruitment to the 43S PIC and scanning of the mRNA for AUG recognition. The eIF-3 complex is also required for disassembly and recycling of post-termination ribosomal complexes and subsequently prevents premature joining of the 40S and 60S ribosomal subunits prior to initiation. The eIF-3 complex specifically targets and initiates translation of a subset of mRNAs involved in cell proliferation, including cell cycling, differentiation and apoptosis, and uses different modes of RNA stem-loop binding to exert either translational activation or repression. The polypeptide is Eukaryotic translation initiation factor 3 subunit L (Eif3l) (Mus musculus (Mouse)).